The primary structure comprises 139 residues: D-ribose pyranase (139 aa).

The Proton donor role is filled by His20. Substrate-binding positions include Asp28, His106, and 128-130 (YAN).

This sequence belongs to the RbsD / FucU family. RbsD subfamily. Homodecamer.

The protein localises to the cytoplasm. It carries out the reaction beta-D-ribopyranose = beta-D-ribofuranose. It functions in the pathway carbohydrate metabolism; D-ribose degradation; D-ribose 5-phosphate from beta-D-ribopyranose: step 1/2. Functionally, catalyzes the interconversion of beta-pyran and beta-furan forms of D-ribose. The polypeptide is D-ribose pyranase (Shewanella pealeana (strain ATCC 700345 / ANG-SQ1)).